Here is a 428-residue protein sequence, read N- to C-terminus: Enolase (428 aa).

Gln163 is a binding site for (2R)-2-phosphoglycerate. Glu205 functions as the Proton donor in the catalytic mechanism. Residues Asp242, Glu285, and Asp312 each contribute to the Mg(2+) site. (2R)-2-phosphoglycerate contacts are provided by Lys337, Arg366, Ser367, and Lys388. The Proton acceptor role is filled by Lys337.

It belongs to the enolase family. Mg(2+) serves as cofactor.

It localises to the cytoplasm. It is found in the secreted. The protein localises to the cell surface. It catalyses the reaction (2R)-2-phosphoglycerate = phosphoenolpyruvate + H2O. It functions in the pathway carbohydrate degradation; glycolysis; pyruvate from D-glyceraldehyde 3-phosphate: step 4/5. Functionally, catalyzes the reversible conversion of 2-phosphoglycerate (2-PG) into phosphoenolpyruvate (PEP). It is essential for the degradation of carbohydrates via glycolysis. The chain is Enolase from Erythrobacter litoralis (strain HTCC2594).